Here is a 225-residue protein sequence, read N- to C-terminus: 2-C-methyl-D-erythritol 4-phosphate cytidylyltransferase (225 aa).

The protein belongs to the IspD/TarI cytidylyltransferase family. IspD subfamily.

It carries out the reaction 2-C-methyl-D-erythritol 4-phosphate + CTP + H(+) = 4-CDP-2-C-methyl-D-erythritol + diphosphate. It participates in isoprenoid biosynthesis; isopentenyl diphosphate biosynthesis via DXP pathway; isopentenyl diphosphate from 1-deoxy-D-xylulose 5-phosphate: step 2/6. In terms of biological role, catalyzes the formation of 4-diphosphocytidyl-2-C-methyl-D-erythritol from CTP and 2-C-methyl-D-erythritol 4-phosphate (MEP). This is 2-C-methyl-D-erythritol 4-phosphate cytidylyltransferase from Haemophilus influenzae (strain PittGG).